Reading from the N-terminus, the 387-residue chain is Succinate--CoA ligase [ADP-forming] subunit beta (387 aa).

Residues lysine 46, 53 to 55 (GRG), glutamate 99, alanine 102, and glutamate 107 contribute to the ATP site. 2 residues coordinate Mg(2+): asparagine 199 and aspartate 213. Substrate is bound by residues asparagine 264 and 321 to 323 (GIV).

It belongs to the succinate/malate CoA ligase beta subunit family. Heterotetramer of two alpha and two beta subunits. Mg(2+) is required as a cofactor.

It catalyses the reaction succinate + ATP + CoA = succinyl-CoA + ADP + phosphate. The enzyme catalyses GTP + succinate + CoA = succinyl-CoA + GDP + phosphate. It participates in carbohydrate metabolism; tricarboxylic acid cycle; succinate from succinyl-CoA (ligase route): step 1/1. Succinyl-CoA synthetase functions in the citric acid cycle (TCA), coupling the hydrolysis of succinyl-CoA to the synthesis of either ATP or GTP and thus represents the only step of substrate-level phosphorylation in the TCA. The beta subunit provides nucleotide specificity of the enzyme and binds the substrate succinate, while the binding sites for coenzyme A and phosphate are found in the alpha subunit. The sequence is that of Succinate--CoA ligase [ADP-forming] subunit beta from Campylobacter jejuni (strain RM1221).